The sequence spans 387 residues: Anhydro-N-acetylmuramic acid kinase (387 aa).

9–16 (GTSVDGID) contacts ATP.

This sequence belongs to the anhydro-N-acetylmuramic acid kinase family.

The catalysed reaction is 1,6-anhydro-N-acetyl-beta-muramate + ATP + H2O = N-acetyl-D-muramate 6-phosphate + ADP + H(+). It participates in amino-sugar metabolism; 1,6-anhydro-N-acetylmuramate degradation. It functions in the pathway cell wall biogenesis; peptidoglycan recycling. Its function is as follows. Catalyzes the specific phosphorylation of 1,6-anhydro-N-acetylmuramic acid (anhMurNAc) with the simultaneous cleavage of the 1,6-anhydro ring, generating MurNAc-6-P. Is required for the utilization of anhMurNAc either imported from the medium or derived from its own cell wall murein, and thus plays a role in cell wall recycling. In Synechocystis sp. (strain ATCC 27184 / PCC 6803 / Kazusa), this protein is Anhydro-N-acetylmuramic acid kinase.